The sequence spans 333 residues: Mitochondrial glycine transporter (333 aa).

3 Solcar repeats span residues 10-93, 125-209, and 235-319; these read SKST…IRQS, LSNT…GKKR, and HAAS…LIRR. 2 consecutive transmembrane segments (helical) span residues 16 to 41 and 68 to 94; these read FAAGLGSGVLSAVLLQPIDLLKTRVQ and GAVPSALRTGFGSAIYFTSLNAIRQSA. The segment at 98-126 is disordered; the sequence is SPLPSSSSSTTTSSSTTTSSSSSSLPKLS. 4 helical membrane passes run 131–156, 184–207, 239–265, and 294–312; these read LLAGAAARSLAGLILMPLTVLKVRYE, GYGATAVRDAPYAGLYVLFYEQGK, INFASGVLAGVICSVVSNPFDAVKTRI, and GLALRMSRKAVSSALAWTV.

Belongs to the mitochondrial carrier (TC 2.A.29) family. SLC25A38 subfamily.

The protein localises to the mitochondrion inner membrane. It catalyses the reaction glycine(in) = glycine(out). Functionally, mitochondrial glycine transporter that imports glycine into the mitochondrial matrix. Plays an important role in providing glycine for the first enzymatic step in heme biosynthesis, the condensation of glycine with succinyl-CoA to produce 5-aminolevulinate (ALA) in the mitochondrial matrix. In Chaetomium globosum (strain ATCC 6205 / CBS 148.51 / DSM 1962 / NBRC 6347 / NRRL 1970) (Soil fungus), this protein is Mitochondrial glycine transporter.